A 489-amino-acid chain; its full sequence is MSSAVKLADRYLMTKRLGDGTFGEVMLAKKIDTGDRVAIKRMKKKFYSWEEAMSLREVKSLKKLNHPNIIKLREVIRENDILYFVFEFMQENLYELMKDRDRYFPESVIRNIIYQVLQGLAFMHKNGFFHRDMKPENIMCNGTELVKIADFGLAREIRSKPPYTDYVSTRWYRAPEILLRSTSYNSPIDMWALGCIMAELYILRPLFPGTSEMDQLFKIISILGTPNKDEWPEGYQLASAMNFRFQQVVATPMEQVVNTISKEGMKLMMDMMLWNPEKRPNANQSLRYKYFQVAEKLGAPVVSQPAPGSIRKTSAASVKSDTKAMTAKAAKKDYIGSENVSPQQPAKVIDRHINRNLPLNKETLFEKSDNKPLGPTKSNEAKPTAKEIYLSKSKYVPGQVSKDTHQNQIMTTNGLTGTTKTTTFSAKKEGRTAVQTRFEYAYGYIPSFGARQTGPTVSNQTNNHSANNSHSPNKMSNTGRVDWAAKYVK.

In terms of domain architecture, Protein kinase spans 11–291; that stretch reads YLMTKRLGDG…ANQSLRYKYF (281 aa). Residues 17-25 and K40 each bind ATP; that span reads LGDGTFGEV. The Proton acceptor role is filled by D132. Disordered stretches follow at residues 366–385 and 452–489; these read EKSDNKPLGPTKSNEAKPTA and QTGPTVSNQTNNHSANNSHSPNKMSNTGRVDWAAKYVK. Low complexity predominate over residues 458 to 473; sequence SNQTNNHSANNSHSPN.

It belongs to the protein kinase superfamily. CMGC Ser/Thr protein kinase family. RCK subfamily. Requires Mg(2+) as cofactor. In terms of tissue distribution, expressed in head neurons including amphid and labial sensory neurons and 3 pairs of neurons in the tail including phasmid sensory neurons. In male, expressed in the tail including the sensory rays and the spicule.

Its subcellular location is the perikaryon. It is found in the cell projection. The protein resides in the dendrite. The protein localises to the axon. It localises to the cilium. It carries out the reaction L-seryl-[protein] + ATP = O-phospho-L-seryl-[protein] + ADP + H(+). The catalysed reaction is L-threonyl-[protein] + ATP = O-phospho-L-threonyl-[protein] + ADP + H(+). Serine/threonine-protein kinase which is required for ciliogenesis. Regulates the length and the morphology of sensory neuron cilia. In addition, plays a role in the anterograde intraflagellar transport (IFT) in the cilia by regulating the undocking of kinesin-II motor complex (composed of klp-11, klp-20 and kap-1) before reaching the distal segment and the docking of kinesin motor osm-3 onto IFT cargos. The chain is Serine/threonine-protein kinase dyf-5 from Caenorhabditis elegans.